The chain runs to 513 residues: Zinc finger CCCH-type with G patch domain-containing protein (513 aa).

The C3H1-type zinc finger occupies 155-178 (PCSYYLEGECRFDETKCRFSHGAL). Over residues 252 to 261 (DQEEDDELSS) the composition is skewed to acidic residues. The disordered stretch occupies residues 252–282 (DQEEDDELSSEESNSSMNNESSDEAESDMDD). Residues 262 to 271 (EESNSSMNNE) show a composition bias toward low complexity. A compositionally biased stretch (acidic residues) spans 272 to 282 (SSDEAESDMDD). The region spanning 312 to 358 (TRGIGSKLMEKMGYIHGTGLGSDGRGIVTPVSAQILPQGRSLDACME) is the G-patch domain. Positions 478–495 (VQMQSHKQELATLQAQER) are enriched in polar residues. Residues 478 to 513 (VQMQSHKQELATLQAQERSLSKEQQTRKSKNKMFEF) are disordered. The segment covering 496-513 (SLSKEQQTRKSKNKMFEF) has biased composition (basic and acidic residues).

It localises to the nucleus. Functionally, transcription repressor. This chain is Zinc finger CCCH-type with G patch domain-containing protein, found in Drosophila erecta (Fruit fly).